We begin with the raw amino-acid sequence, 73 residues long: UPF0235 protein LA_1736 (73 aa).

Belongs to the UPF0235 family.

In Leptospira interrogans serogroup Icterohaemorrhagiae serovar Lai (strain 56601), this protein is UPF0235 protein LA_1736.